Here is a 246-residue protein sequence, read N- to C-terminus: Acetoacetate decarboxylase (246 aa).

The active-site Schiff-base intermediate with acetoacetate is Lys116.

It belongs to the ADC family. Homododecamer.

It catalyses the reaction acetoacetate + H(+) = acetone + CO2. Functionally, catalyzes the conversion of acetoacetate to acetone and carbon dioxide. The protein is Acetoacetate decarboxylase of Chromobacterium violaceum (strain ATCC 12472 / DSM 30191 / JCM 1249 / CCUG 213 / NBRC 12614 / NCIMB 9131 / NCTC 9757 / MK).